We begin with the raw amino-acid sequence, 337 residues long: Phenylalanine--tRNA ligase alpha subunit (337 aa).

Position 252 (Glu252) interacts with Mg(2+).

This sequence belongs to the class-II aminoacyl-tRNA synthetase family. Phe-tRNA synthetase alpha subunit type 1 subfamily. As to quaternary structure, tetramer of two alpha and two beta subunits. Requires Mg(2+) as cofactor.

It is found in the cytoplasm. It catalyses the reaction tRNA(Phe) + L-phenylalanine + ATP = L-phenylalanyl-tRNA(Phe) + AMP + diphosphate + H(+). This chain is Phenylalanine--tRNA ligase alpha subunit, found in Francisella tularensis subsp. novicida (strain U112).